The sequence spans 229 residues: MEKLTTLTGVGVPLRRSNVDTDQIIPAVFLKRVTKSGFDDALFYAWRRDPNFVLNKPEYAGKGQILVAGPEFGIGSSREHAVWALHDYGFRVVIAPSFADIFYGNTAKNGVLAAIMPQESVELLWKLLEEEPGREMTVSLETRTVTCGDVTLPFEVNDYVRWRLMNGYDDIDLTLQHEDDIAAYEKMRAEKFPFKPKTIPAKHWPEEKIESAREPDDDWTGPLADRGII.

The tract at residues 208–229 (KIESAREPDDDWTGPLADRGII) is disordered.

The protein belongs to the LeuD family. LeuD type 1 subfamily. As to quaternary structure, heterodimer of LeuC and LeuD.

The enzyme catalyses (2R,3S)-3-isopropylmalate = (2S)-2-isopropylmalate. The protein operates within amino-acid biosynthesis; L-leucine biosynthesis; L-leucine from 3-methyl-2-oxobutanoate: step 2/4. Functionally, catalyzes the isomerization between 2-isopropylmalate and 3-isopropylmalate, via the formation of 2-isopropylmaleate. The polypeptide is 3-isopropylmalate dehydratase small subunit (Bifidobacterium longum subsp. infantis (strain ATCC 15697 / DSM 20088 / JCM 1222 / NCTC 11817 / S12)).